Reading from the N-terminus, the 61-residue chain is Probable tautomerase SAV1363 (61 aa).

The Proton acceptor; via imino nitrogen role is filled by Pro2.

The protein belongs to the 4-oxalocrotonate tautomerase family.

This chain is Probable tautomerase SAV1363, found in Staphylococcus aureus (strain Mu50 / ATCC 700699).